The following is a 715-amino-acid chain: Fatty acid oxidation complex subunit alpha (715 aa).

An enoyl-CoA hydratase region spans residues 1 to 190 (MTTTSAFMLN…KAGLVDDVVP (190 aa)). Residues 306-715 (GPLNSVGILG…WTNGETDQGN (410 aa)) form a 3-hydroxyacyl-CoA dehydrogenase region.

This sequence in the N-terminal section; belongs to the enoyl-CoA hydratase/isomerase family. The protein in the central section; belongs to the 3-hydroxyacyl-CoA dehydrogenase family. In terms of assembly, heterotetramer of two alpha chains (FadJ) and two beta chains (FadI).

The protein localises to the cytoplasm. The enzyme catalyses a (3S)-3-hydroxyacyl-CoA = a (2E)-enoyl-CoA + H2O. The catalysed reaction is a 4-saturated-(3S)-3-hydroxyacyl-CoA = a (3E)-enoyl-CoA + H2O. It carries out the reaction a (3S)-3-hydroxyacyl-CoA + NAD(+) = a 3-oxoacyl-CoA + NADH + H(+). It catalyses the reaction (3S)-3-hydroxybutanoyl-CoA = (3R)-3-hydroxybutanoyl-CoA. Its pathway is lipid metabolism; fatty acid beta-oxidation. Functionally, catalyzes the formation of a hydroxyacyl-CoA by addition of water on enoyl-CoA. Also exhibits 3-hydroxyacyl-CoA epimerase and 3-hydroxyacyl-CoA dehydrogenase activities. This chain is Fatty acid oxidation complex subunit alpha, found in Salmonella paratyphi B (strain ATCC BAA-1250 / SPB7).